The sequence spans 1178 residues: Pesticidal crystal protein Cry1Ac (1178 aa).

It belongs to the delta endotoxin family.

Its function is as follows. Promotes colloidosmotic lysis by binding to the midgut epithelial cells of many lepidopteran larvae. The sequence is that of Pesticidal crystal protein Cry1Ac (cry1Ac) from Bacillus thuringiensis subsp. kurstaki.